Here is a 246-residue protein sequence, read N- to C-terminus: Small ribosomal subunit protein uS2 (246 aa).

It belongs to the universal ribosomal protein uS2 family.

The sequence is that of Small ribosomal subunit protein uS2 from Exiguobacterium sp. (strain ATCC BAA-1283 / AT1b).